We begin with the raw amino-acid sequence, 257 residues long: Ribosomal RNA small subunit methyltransferase J (257 aa).

S-adenosyl-L-methionine-binding positions include 107–108 (RD), 123–124 (ER), and D177.

It belongs to the methyltransferase superfamily. RsmJ family.

The protein resides in the cytoplasm. It carries out the reaction guanosine(1516) in 16S rRNA + S-adenosyl-L-methionine = N(2)-methylguanosine(1516) in 16S rRNA + S-adenosyl-L-homocysteine + H(+). Functionally, specifically methylates the guanosine in position 1516 of 16S rRNA. In Haemophilus influenzae (strain PittGG), this protein is Ribosomal RNA small subunit methyltransferase J.